The following is a 532-amino-acid chain: Protein DA1 (532 aa).

The disordered stretch occupies residues 26-71 (VYYDNYPTASHDDEPSAADTDADNDEPHHTQEPSTSEDNTSNDQEN). Residues 57–68 (EPSTSEDNTSND) are compositionally biased toward polar residues. In terms of domain architecture, UIM 1 spans 69–88 (QENEDIDRAIALSLLEENQE). Lys-95 participates in a covalent cross-link: Glycyl lysine isopeptide (Lys-Gly) (interchain with G-Cter in ubiquitin). The UIM 2 domain maps to 101 to 120 (DEDEQLARALQESMVVGNSP). An LIM zinc-binding domain is found at 170–230 (RICAGCNMEI…KACYRERYHP (61 aa)). Glycyl lysine isopeptide (Lys-Gly) (interchain with G-Cter in ubiquitin) cross-links involve residues Lys-221, Lys-348, Lys-376, Lys-381, Lys-391, Lys-474, Lys-475, and Lys-519.

As to quaternary structure, interacts with ubiquitin. Interacts (via C-terminus) with DA2. Interacts with BB. Interacts with UBP15. Interacts with TCP14 and TCP15. Ubiquitinated at Lys-95, Lys-221, Lys-348, Lys-376, Lys-381, Lys-391, Lys-474, Lys-475 and Lys-519 by the E3 ubiquitin-protein ligases BB and DA2.

Its function is as follows. Ubiquitin receptor that limits final seed and organ size by restricting the period of cell proliferation. May act maternally to control seed mass. Acts synergistically with DA2 to regulate seed size. Functions synergistically with DA2 to restrict cell proliferation in the maternal integuments of ovules and developing seeds. Functions antagonistically in a common pathway with UBP15 to regulate seed size. Associates physically with UBP15 and modulates the stability of UBP15, which promote cell proliferation in the integuments of ovules and developing seeds. Functions as a peptidase and cleaves the N-terminal sequence of E3 ubiquitin-protein ligases BB and DA2 in a ubiquitin-dependent manner. Cleaves the deubiquitinating enzyme UBP15, which promotes cell proliferation, and the transcription factors TCP15 and TCP22, which promote cell proliferation and repress endoreduplication. Involved in the promotion of leaf senescence, in addition to its function in restricting plant growth. Acts redundantly with DAR1 and DAR2 to regulate endoreduplication during leaf development. Together with DAR1 and DAR2, modulates the protein stability of the transcription factors TCP14 and TCP15, which repress endoreduplication by directly regulating the expression of cell-cycle genes. In Arabidopsis thaliana (Mouse-ear cress), this protein is Protein DA1 (DA1).